The following is a 427-amino-acid chain: Phosphatidate cytidylyltransferase, mitochondrial (427 aa).

A compositionally biased stretch (polar residues) spans 94 to 106 (YNRNGDGSTSTEN). Residues 94–113 (YNRNGDGSTSTENPSKKEEQ) form a disordered region.

The protein belongs to the TAM41 family. Requires Mg(2+) as cofactor.

The protein resides in the mitochondrion inner membrane. The catalysed reaction is a 1,2-diacyl-sn-glycero-3-phosphate + CTP + H(+) = a CDP-1,2-diacyl-sn-glycerol + diphosphate. It functions in the pathway phospholipid metabolism; CDP-diacylglycerol biosynthesis; CDP-diacylglycerol from sn-glycerol 3-phosphate: step 3/3. Its function is as follows. Catalyzes the formation of CDP-diacylglycerol (CDP-DAG) from phosphatidic acid (PA) in the mitochondrial inner membrane. Required for the biosynthesis of the dimeric phospholipid cardiolipin, which stabilizes supercomplexes of the mitochondrial respiratory chain in the mitochondrial inner membrane. This chain is Phosphatidate cytidylyltransferase, mitochondrial, found in Dictyostelium discoideum (Social amoeba).